The primary structure comprises 263 residues: Microtubule-associated protein RP/EB family member 1 (263 aa).

Residues 14–116 form the Calponin-homology (CH) domain; that stretch reads NLSRHDMLAW…FVQWFKKFFD (103 aa). The EB1 C-terminal domain occupies 180-250; it reads KKAAGDDESA…LYATDEGFVI (71 aa).

This sequence belongs to the MAPRE family.

The protein resides in the cytoplasm. The protein localises to the cytoskeleton. It localises to the microtubule organizing center. Its subcellular location is the centrosome. It is found in the golgi apparatus. The protein resides in the spindle. The protein localises to the spindle pole. In terms of biological role, plus-end tracking protein (+TIP) that binds to the plus-end of microtubules and regulates the dynamics of the microtubule cytoskeleton. Promotes cytoplasmic microtubule nucleation and elongation. Involved in mitotic spindle positioning by stabilizing microtubules and promoting dynamic connection between astral microtubules and the cortex during mitotic chromosome segregation. The protein is Microtubule-associated protein RP/EB family member 1 (MAPRE1) of Coturnix coturnix (Common quail).